A 171-amino-acid chain; its full sequence is Flavodoxin (171 aa).

Residues 4–165 (IGIFFGSDTG…RIKQWVKQII (162 aa)) enclose the Flavodoxin-like domain.

It belongs to the flavodoxin family. FMN serves as cofactor.

Its function is as follows. Low-potential electron donor to a number of redox enzymes. In Buchnera aphidicola subsp. Acyrthosiphon pisum (strain APS) (Acyrthosiphon pisum symbiotic bacterium), this protein is Flavodoxin (fldA).